A 633-amino-acid chain; its full sequence is uncharacterized protein (633 aa).

This is an uncharacterized protein from Acanthamoeba polyphaga mimivirus (APMV).